The chain runs to 206 residues: Cytidylate kinase (206 aa).

7–15 (GPAASGKGT) provides a ligand contact to ATP.

The protein belongs to the cytidylate kinase family. Type 1 subfamily.

The protein localises to the cytoplasm. The catalysed reaction is CMP + ATP = CDP + ADP. The enzyme catalyses dCMP + ATP = dCDP + ADP. In Azorhizobium caulinodans (strain ATCC 43989 / DSM 5975 / JCM 20966 / LMG 6465 / NBRC 14845 / NCIMB 13405 / ORS 571), this protein is Cytidylate kinase.